The primary structure comprises 159 residues: Ribosomal RNA large subunit methyltransferase H (159 aa).

S-adenosyl-L-methionine-binding positions include Leu76, Gly108, and 127-132; that span reads FGLLTL.

Belongs to the RNA methyltransferase RlmH family. Homodimer.

The protein localises to the cytoplasm. The enzyme catalyses pseudouridine(1915) in 23S rRNA + S-adenosyl-L-methionine = N(3)-methylpseudouridine(1915) in 23S rRNA + S-adenosyl-L-homocysteine + H(+). Its function is as follows. Specifically methylates the pseudouridine at position 1915 (m3Psi1915) in 23S rRNA. The chain is Ribosomal RNA large subunit methyltransferase H from Leuconostoc mesenteroides subsp. mesenteroides (strain ATCC 8293 / DSM 20343 / BCRC 11652 / CCM 1803 / JCM 6124 / NCDO 523 / NBRC 100496 / NCIMB 8023 / NCTC 12954 / NRRL B-1118 / 37Y).